A 303-amino-acid chain; its full sequence is Large ribosomal subunit protein uL1m (303 aa).

This sequence belongs to the universal ribosomal protein uL1 family. As to quaternary structure, component of the mitochondrial large ribosomal subunit (mt-LSU). Mature N.crassa 74S mitochondrial ribosomes consist of a small (37S) and a large (54S) subunit. The 37S small subunit contains a 16S ribosomal RNA (16S mt-rRNA) and 32 different proteins. The 54S large subunit contains a 23S rRNA (23S mt-rRNA) and 42 different proteins.

The protein localises to the mitochondrion. Its function is as follows. Component of the mitochondrial ribosome (mitoribosome), a dedicated translation machinery responsible for the synthesis of mitochondrial genome-encoded proteins, including at least some of the essential transmembrane subunits of the mitochondrial respiratory chain. The mitoribosomes are attached to the mitochondrial inner membrane and translation products are cotranslationally integrated into the membrane. This Neurospora crassa (strain ATCC 24698 / 74-OR23-1A / CBS 708.71 / DSM 1257 / FGSC 987) protein is Large ribosomal subunit protein uL1m (mrpl1).